The primary structure comprises 247 residues: Protein-L-isoaspartate O-methyltransferase 2 (247 aa).

Residue S97 is part of the active site.

Belongs to the methyltransferase superfamily. L-isoaspartyl/D-aspartyl protein methyltransferase family.

The protein localises to the cytoplasm. The catalysed reaction is [protein]-L-isoaspartate + S-adenosyl-L-methionine = [protein]-L-isoaspartate alpha-methyl ester + S-adenosyl-L-homocysteine. In terms of biological role, catalyzes the methyl esterification of L-isoaspartyl residues in peptides and proteins that result from spontaneous decomposition of normal L-aspartyl and L-asparaginyl residues. It plays a role in the repair and/or degradation of damaged proteins. The protein is Protein-L-isoaspartate O-methyltransferase 2 of Syntrophobacter fumaroxidans (strain DSM 10017 / MPOB).